Reading from the N-terminus, the 392-residue chain is 1-deoxy-D-xylulose 5-phosphate reductoisomerase (392 aa).

Residues Thr-10, Gly-11, Ser-12, Ile-13, Asn-38, and Asn-124 each coordinate NADPH. 1-deoxy-D-xylulose 5-phosphate is bound at residue Lys-125. Glu-126 is an NADPH binding site. Residue Asp-150 coordinates Mn(2+). 1-deoxy-D-xylulose 5-phosphate contacts are provided by Ser-151, Glu-152, Ser-176, and His-199. Glu-152 contributes to the Mn(2+) binding site. Gly-205 is an NADPH binding site. Ser-212, Asn-217, Lys-218, and Glu-221 together coordinate 1-deoxy-D-xylulose 5-phosphate. Residue Glu-221 participates in Mn(2+) binding.

It belongs to the DXR family. Mg(2+) is required as a cofactor. Mn(2+) serves as cofactor.

The enzyme catalyses 2-C-methyl-D-erythritol 4-phosphate + NADP(+) = 1-deoxy-D-xylulose 5-phosphate + NADPH + H(+). Its pathway is isoprenoid biosynthesis; isopentenyl diphosphate biosynthesis via DXP pathway; isopentenyl diphosphate from 1-deoxy-D-xylulose 5-phosphate: step 1/6. Functionally, catalyzes the NADPH-dependent rearrangement and reduction of 1-deoxy-D-xylulose-5-phosphate (DXP) to 2-C-methyl-D-erythritol 4-phosphate (MEP). This Gloeobacter violaceus (strain ATCC 29082 / PCC 7421) protein is 1-deoxy-D-xylulose 5-phosphate reductoisomerase.